Consider the following 988-residue polypeptide: Transposase for transposon Tn21 (988 aa).

A disordered region spans residues 672–696; that stretch reads GDGTTSSSDEQNFRTASKAKSTGHI. Residues 674–695 are compositionally biased toward polar residues; sequence GTTSSSDEQNFRTASKAKSTGH.

The protein belongs to the transposase 7 family.

Its function is as follows. Required for transposition of transposon Tn21. The protein is Transposase for transposon Tn21 (tnpA) of Escherichia coli.